The sequence spans 454 residues: MIGKVFRIHMVGIGGTGMCGIAEVLLNLGFEVRGSDMNDSPSVRRLRRLGADIFIGHGAENVTDAQVLVKSTAVSMDNPEVQAAQEKGIPIIPRAEMLAELMRLRKGIAIAGTHGKTTTTSLTAAIFDEAGTDPTVIIGGRLNAYGSNARLGEGEFLLAEADESDGSFLCLSPVVNVVTNVDLDHVDFYHDQQAIDTAFINFMNKVPFYGMNVVCGDDAGVRRLLPQIKRPVLTYGFGPDNQLRAETVTCGETSRFRVLLHGEDLGEVNLVQPGRHNVLNALAAIGVGLETGIAADVCLRGLANFRGVGRRFERKGERGGVLVVDDYGHHPAEIAATLATARTCYPGRRLVVAFQPHRFSRTKALFGDFCKAFDNVDKLLLTEIYPASEAPIPGVSGQSLAQGIRQVSNTDVDYFQDFDAMRAALPETLRPGDLFLTLGAGSIWTVGQFYLDGE.

Position 112–118 (glycine 112–threonine 118) interacts with ATP.

It belongs to the MurCDEF family.

It localises to the cytoplasm. It carries out the reaction UDP-N-acetyl-alpha-D-muramate + L-alanine + ATP = UDP-N-acetyl-alpha-D-muramoyl-L-alanine + ADP + phosphate + H(+). The protein operates within cell wall biogenesis; peptidoglycan biosynthesis. In terms of biological role, cell wall formation. The protein is UDP-N-acetylmuramate--L-alanine ligase of Oleidesulfovibrio alaskensis (strain ATCC BAA-1058 / DSM 17464 / G20) (Desulfovibrio alaskensis).